The following is a 568-amino-acid chain: Probable asparagine--tRNA ligase, cytoplasmic (568 aa).

It belongs to the class-II aminoacyl-tRNA synthetase family.

The protein localises to the cytoplasm. The catalysed reaction is tRNA(Asn) + L-asparagine + ATP = L-asparaginyl-tRNA(Asn) + AMP + diphosphate + H(+). In terms of biological role, cytosolic asparaginyl-tRNA synthetase which catalyzes the specific attachment of asparagine to its cognate tRNA. This chain is Probable asparagine--tRNA ligase, cytoplasmic (nrs1), found in Schizosaccharomyces pombe (strain 972 / ATCC 24843) (Fission yeast).